A 106-amino-acid chain; its full sequence is ATP-dependent Clp protease adapter protein ClpS (106 aa).

Belongs to the ClpS family. As to quaternary structure, binds to the N-terminal domain of the chaperone ClpA.

Involved in the modulation of the specificity of the ClpAP-mediated ATP-dependent protein degradation. In Escherichia fergusonii (strain ATCC 35469 / DSM 13698 / CCUG 18766 / IAM 14443 / JCM 21226 / LMG 7866 / NBRC 102419 / NCTC 12128 / CDC 0568-73), this protein is ATP-dependent Clp protease adapter protein ClpS.